The following is a 495-amino-acid chain: UDP-glycosyltransferase 71B7 (495 aa).

Residues Ser284, 351–353, 368–376, and 390–393 each bind UDP-alpha-D-glucose; these read APQ, HCGWNSTLE, and YAEQ.

This sequence belongs to the UDP-glycosyltransferase family.

The protein is UDP-glycosyltransferase 71B7 (UGT71B7) of Arabidopsis thaliana (Mouse-ear cress).